We begin with the raw amino-acid sequence, 92 residues long: Defensin-like protein 96 (92 aa).

The N-terminal stretch at 1-29 is a signal peptide; it reads MGSLRLSTVAIAVVVCLSILLISPTEVDG. Cystine bridges form between cysteine 33/cysteine 80, cysteine 40/cysteine 65, cysteine 49/cysteine 77, and cysteine 53/cysteine 79.

It belongs to the DEFL family.

It localises to the secreted. This is Defensin-like protein 96 from Arabidopsis thaliana (Mouse-ear cress).